Here is a 273-residue protein sequence, read N- to C-terminus: Formamidopyrimidine-DNA glycosylase (273 aa).

Pro2 acts as the Schiff-base intermediate with DNA in catalysis. Catalysis depends on Glu3, which acts as the Proton donor. The Proton donor; for beta-elimination activity role is filled by Lys58. 3 residues coordinate DNA: His92, Arg111, and Lys153. Residues 238–272 form an FPG-type zinc finger; that stretch reads KVYGREGQSCLSCSSTIIKIKHSGRSTFYCKTCQY. Catalysis depends on Arg262, which acts as the Proton donor; for delta-elimination activity.

It belongs to the FPG family. In terms of assembly, monomer. Zn(2+) is required as a cofactor.

The catalysed reaction is Hydrolysis of DNA containing ring-opened 7-methylguanine residues, releasing 2,6-diamino-4-hydroxy-5-(N-methyl)formamidopyrimidine.. It catalyses the reaction 2'-deoxyribonucleotide-(2'-deoxyribose 5'-phosphate)-2'-deoxyribonucleotide-DNA = a 3'-end 2'-deoxyribonucleotide-(2,3-dehydro-2,3-deoxyribose 5'-phosphate)-DNA + a 5'-end 5'-phospho-2'-deoxyribonucleoside-DNA + H(+). Functionally, involved in base excision repair of DNA damaged by oxidation or by mutagenic agents. Acts as a DNA glycosylase that recognizes and removes damaged bases. Has a preference for oxidized purines, such as 7,8-dihydro-8-oxoguanine (8-oxoG). Has AP (apurinic/apyrimidinic) lyase activity and introduces nicks in the DNA strand. Cleaves the DNA backbone by beta-delta elimination to generate a single-strand break at the site of the removed base with both 3'- and 5'-phosphates. The chain is Formamidopyrimidine-DNA glycosylase from Rickettsia conorii (strain ATCC VR-613 / Malish 7).